A 114-amino-acid chain; its full sequence is Abscisic stress-ripening protein 2 (114 aa).

2 disordered regions span residues 1–25 (MAEE…GGPV) and 88–114 (FHEH…HHHY). A compositionally biased stretch (basic residues) spans 7–16 (QHHHHLFHHK). Positions 97 to 107 (AKKEKKEVEGG) are enriched in basic and acidic residues.

The protein belongs to the abscisic acid and water stress-induced protein family.

This Solanum lycopersicum (Tomato) protein is Abscisic stress-ripening protein 2.